A 286-amino-acid chain; its full sequence is Ribosome maturation factor RimP (286 aa).

Over residues 200–224 (LDGEDGDDTGVDAGDPDQDDADDAL) the composition is skewed to acidic residues. The tract at residues 200–286 (LDGEDGDDTG…ANASTVKETH (87 aa)) is disordered. Over residues 248-267 (VGRKAKGKKASPKKSNAKKK) the composition is skewed to basic residues. Positions 273-286 (AASSANASTVKETH) are enriched in polar residues.

It belongs to the RimP family.

Its subcellular location is the cytoplasm. Functionally, required for maturation of 30S ribosomal subunits. The sequence is that of Ribosome maturation factor RimP from Xanthobacter autotrophicus (strain ATCC BAA-1158 / Py2).